The following is a 375-amino-acid chain: Alpha-1,2-galactosyltransferase (375 aa).

Over 1-2 (MR) the chain is Cytoplasmic. Residues 3–23 (FAPYLISAVVITTIILGGAWW) traverse the membrane as a helical; Signal-anchor for type II membrane protein segment. Residues 24-375 (TSAMDTKLQT…HIQNLLKPSS (352 aa)) are Lumenal-facing.

The protein belongs to the glycosyltransferase 34 family. Post-translationally, O-glycosylated.

It is found in the golgi apparatus membrane. In terms of biological role, involved in the O- and N-linked oligosaccharide modification of proteins transported through the Golgi stack. This occurs in cis Golgi where the enzyme transfers galactose from UDP-galactose to a variety of mannose based acceptors. This chain is Alpha-1,2-galactosyltransferase (gma12), found in Schizosaccharomyces pombe (strain 972 / ATCC 24843) (Fission yeast).